The primary structure comprises 283 residues: Pantothenate synthetase (283 aa).

30–37 (MGYLHDGH) contributes to the ATP binding site. His37 acts as the Proton donor in catalysis. Residue Gln61 coordinates (R)-pantoate. Gln61 serves as a coordination point for beta-alanine. 148-151 (GQKD) is an ATP binding site. Position 154 (Gln154) interacts with (R)-pantoate. 185-188 (MSSR) is an ATP binding site.

Belongs to the pantothenate synthetase family. As to quaternary structure, homodimer.

It localises to the cytoplasm. It catalyses the reaction (R)-pantoate + beta-alanine + ATP = (R)-pantothenate + AMP + diphosphate + H(+). It functions in the pathway cofactor biosynthesis; (R)-pantothenate biosynthesis; (R)-pantothenate from (R)-pantoate and beta-alanine: step 1/1. Functionally, catalyzes the condensation of pantoate with beta-alanine in an ATP-dependent reaction via a pantoyl-adenylate intermediate. The polypeptide is Pantothenate synthetase (Carboxydothermus hydrogenoformans (strain ATCC BAA-161 / DSM 6008 / Z-2901)).